The primary structure comprises 348 residues: Phospho-2-dehydro-3-deoxyheptonate aldolase, Trp-sensitive (348 aa).

The protein belongs to the class-I DAHP synthase family.

The enzyme catalyses D-erythrose 4-phosphate + phosphoenolpyruvate + H2O = 7-phospho-2-dehydro-3-deoxy-D-arabino-heptonate + phosphate. Its pathway is metabolic intermediate biosynthesis; chorismate biosynthesis; chorismate from D-erythrose 4-phosphate and phosphoenolpyruvate: step 1/7. Stereospecific condensation of phosphoenolpyruvate (PEP) and D-erythrose-4-phosphate (E4P) giving rise to 3-deoxy-D-arabino-heptulosonate-7-phosphate (DAHP). The polypeptide is Phospho-2-dehydro-3-deoxyheptonate aldolase, Trp-sensitive (aroH) (Buchnera aphidicola subsp. Baizongia pistaciae (strain Bp)).